We begin with the raw amino-acid sequence, 297 residues long: MRCLALDIGGTKIASAIVTDGKIEQRQQIATPQADAANAMHDTLANILALYAGQFDYVAVASTGIINHGVLTALNPKNLGGLAEFPLKESIARHTDKPIGLLNDVQAAACAEYKDEDKNAVQNFVFITVSTGVGGGIILERRLLTEPNGVAGHIGHTLADPNGPVCGCGRVGCVEAVAAGRAIEAVSSQWNPPCTPKQAFELFRKNDEKATALIQRSASAIANLIADLVIGLDVQKVVVGGSVGLAEGYLPLVKQYLNMMPHFYHCTVEQARHGQDAGLLGAAWWVADCLKQGVHLK.

Residues 5-12 (ALDIGGTK) and 132-139 (GVGGGIIL) each bind ATP. Zn(2+)-binding residues include His-156, Cys-166, Cys-168, and Cys-173.

Belongs to the ROK (NagC/XylR) family. NanK subfamily. As to quaternary structure, homodimer.

The catalysed reaction is an N-acyl-D-mannosamine + ATP = an N-acyl-D-mannosamine 6-phosphate + ADP + H(+). Its pathway is amino-sugar metabolism; N-acetylneuraminate degradation; D-fructose 6-phosphate from N-acetylneuraminate: step 2/5. Its function is as follows. Catalyzes the phosphorylation of N-acetylmannosamine (ManNAc) to ManNAc-6-P. The chain is N-acetylmannosamine kinase from Pasteurella multocida (strain Pm70).